Reading from the N-terminus, the 495-residue chain is Probable cytosol aminopeptidase (495 aa).

The Mn(2+) site is built by lysine 266 and aspartate 271. The active site involves lysine 278. Mn(2+) contacts are provided by aspartate 289, aspartate 348, and glutamate 350. Arginine 352 is a catalytic residue.

This sequence belongs to the peptidase M17 family. Mn(2+) is required as a cofactor.

The protein resides in the cytoplasm. The enzyme catalyses Release of an N-terminal amino acid, Xaa-|-Yaa-, in which Xaa is preferably Leu, but may be other amino acids including Pro although not Arg or Lys, and Yaa may be Pro. Amino acid amides and methyl esters are also readily hydrolyzed, but rates on arylamides are exceedingly low.. It catalyses the reaction Release of an N-terminal amino acid, preferentially leucine, but not glutamic or aspartic acids.. Presumably involved in the processing and regular turnover of intracellular proteins. Catalyzes the removal of unsubstituted N-terminal amino acids from various peptides. In Pseudomonas aeruginosa (strain UCBPP-PA14), this protein is Probable cytosol aminopeptidase.